We begin with the raw amino-acid sequence, 585 residues long: Mitochondrial translation ATP-dependent RNA helicase mrh5 (585 aa).

Positions 87–117 match the Q motif motif; it reads PKFHELPLNQNILDGLSTNFAEYKNSTPLQQ. The region spanning 121–351 is the Helicase ATP-binding domain; sequence NALMKSGVSF…SRYITDQLGI (231 aa). 134–141 contacts ATP; it reads GWNGSGKS. A DEAD box motif is present at residues 261–264; the sequence is DESD. The Helicase C-terminal domain occupies 390–584; the sequence is NLPYEFVRFN…PKSYEFDDEH (195 aa).

The protein belongs to the DEAD box helicase family. As to quaternary structure, component of the MRH5C complex, composed of mrh5, ppr4, mtf2, and sls1. Proteins mtf2 and sls1 form a subcomplex that serves as a scaffold to bring mrh5 and ppr4 together. The MRH5C complex associates with the small subunit of the mitochondrial ribosome.

It is found in the mitochondrion. It catalyses the reaction ATP + H2O = ADP + phosphate + H(+). Its function is as follows. Translation activation factor that as part of the MRH5C complex specifically recruits cox1 mRNA to the mitochondrial ribosome for translation initiation. This is Mitochondrial translation ATP-dependent RNA helicase mrh5 from Schizosaccharomyces pombe (strain 972 / ATCC 24843) (Fission yeast).